Here is a 444-residue protein sequence, read N- to C-terminus: Glutamyl-tRNA reductase (444 aa).

Residues 49–52 (TCNR), S117, 122–124 (EPQ), and Q128 contribute to the substrate site. The active-site Nucleophile is C50. Residue 202–207 (GAGETI) participates in NADP(+) binding.

The protein belongs to the glutamyl-tRNA reductase family. In terms of assembly, homodimer.

The catalysed reaction is (S)-4-amino-5-oxopentanoate + tRNA(Glu) + NADP(+) = L-glutamyl-tRNA(Glu) + NADPH + H(+). Its pathway is porphyrin-containing compound metabolism; protoporphyrin-IX biosynthesis; 5-aminolevulinate from L-glutamyl-tRNA(Glu): step 1/2. Its function is as follows. Catalyzes the NADPH-dependent reduction of glutamyl-tRNA(Glu) to glutamate 1-semialdehyde (GSA). In Mannheimia succiniciproducens (strain KCTC 0769BP / MBEL55E), this protein is Glutamyl-tRNA reductase.